A 255-amino-acid chain; its full sequence is MARVGGGKRHLKRLAAPAFWPIHRKEAVWAVKPRPGPHPIEESIPLLILVRDVLGYAETSREARKLIAEGRIKVDGRVRKDYKFPVGAMDVIEIVGADEYYRMIPYPVKYLVPMRIDAEEAKKKICRIENKVTVKGGHVQLNLHDGRNVLIRVEDPRNPVEAQEYKTLGGLLITVPEQEILDYVPFEEGVIAIVKSGRNVGRVGRIEEIVKGMGRKKTLVKMRDVHDEVFYTVAEYVFPIGKEEPLIKLPEGAWK.

The 64-residue stretch at 44 to 107 folds into the S4 RNA-binding domain; sequence IPLLILVRDV…DEYYRMIPYP (64 aa).

This sequence belongs to the eukaryotic ribosomal protein eS4 family.

The polypeptide is Small ribosomal subunit protein eS4 (Ignicoccus hospitalis (strain KIN4/I / DSM 18386 / JCM 14125)).